The sequence spans 296 residues: 4-hydroxybenzoate octaprenyltransferase (296 aa).

8 helical membrane-spanning segments follow: residues 28–48 (PIGI…AGNG), 52–72 (LANV…GCCI), 102–122 (ALAL…CTNS), 145–167 (TYYP…FTAA), 174–196 (SAWL…YAMV), 219–239 (NIIL…GSRF), 241–261 (LGGW…WEYW), and 275–295 (FLHN…DYAF).

It belongs to the UbiA prenyltransferase family. Mg(2+) is required as a cofactor.

It is found in the cell inner membrane. It catalyses the reaction all-trans-octaprenyl diphosphate + 4-hydroxybenzoate = 4-hydroxy-3-(all-trans-octaprenyl)benzoate + diphosphate. Its pathway is cofactor biosynthesis; ubiquinone biosynthesis. Functionally, catalyzes the prenylation of para-hydroxybenzoate (PHB) with an all-trans polyprenyl group. Mediates the second step in the final reaction sequence of ubiquinone-8 (UQ-8) biosynthesis, which is the condensation of the polyisoprenoid side chain with PHB, generating the first membrane-bound Q intermediate 3-octaprenyl-4-hydroxybenzoate. The polypeptide is 4-hydroxybenzoate octaprenyltransferase (Pseudomonas putida (strain GB-1)).